The sequence spans 194 residues: MENYQLVLASTSPFRQQLLEKLAIPFSTLSPNCDETPLEGESPQQLVLRLAESKAQSCQINQPSLVIGSDQVCVINGNIVGKPHNRQNAIAQLTAQSGQSIVFYTGLAVYNSETGETRSCIDEFKVHFRPLTQAQIVRYVDKEQPFYCAGSFKSEGLGIALFEKLEGKDPNTLVGLPLIDLIDLLAQQGMQVLG.

The Proton acceptor role is filled by aspartate 70.

This sequence belongs to the Maf family. YceF subfamily. A divalent metal cation is required as a cofactor.

The protein localises to the cytoplasm. It carries out the reaction N(7)-methyl-GTP + H2O = N(7)-methyl-GMP + diphosphate + H(+). Functionally, nucleoside triphosphate pyrophosphatase that hydrolyzes 7-methyl-GTP (m(7)GTP). May have a dual role in cell division arrest and in preventing the incorporation of modified nucleotides into cellular nucleic acids. In Vibrio vulnificus (strain CMCP6), this protein is 7-methyl-GTP pyrophosphatase.